Here is a 738-residue protein sequence, read N- to C-terminus: DNA topoisomerase 4 subunit A (738 aa).

Positions 32 to 496 (LPDVRDGLKP…SFEEVDLTNQ (465 aa)) constitute a Topo IIA-type catalytic domain. Tyr-120 serves as the catalytic O-(5'-phospho-DNA)-tyrosine intermediate.

Belongs to the type II topoisomerase GyrA/ParC subunit family. ParC type 1 subfamily. In terms of assembly, heterotetramer composed of ParC and ParE.

The protein localises to the cell membrane. The catalysed reaction is ATP-dependent breakage, passage and rejoining of double-stranded DNA.. Topoisomerase IV is essential for chromosome segregation. It relaxes supercoiled DNA. Performs the decatenation events required during the replication of a circular DNA molecule. The protein is DNA topoisomerase 4 subunit A of Rickettsia prowazekii (strain Madrid E).